The following is a 456-amino-acid chain: Elongator complex protein 4 (456 aa).

Over residues 1–11 (MSFRKRGEILN) the composition is skewed to basic and acidic residues. Residues 1 to 91 (MSFRKRGEIL…SQPTTSTGSA (91 aa)) are disordered. R13 carries the omega-N-methylarginine modification. The segment covering 18–27 (RGPLLRGPPR) has biased composition (low complexity). Over residues 57 to 66 (NIADESKTKM) the composition is skewed to basic and acidic residues. Positions 77–90 (PSPATSQPTTSTGS) are enriched in low complexity. Residue S222 is modified to Phosphoserine. The disordered stretch occupies residues 424-444 (EGSAASEQSHSHSHSDEISHN). Residues 432–442 (SHSHSHSDEIS) show a composition bias toward basic and acidic residues.

It belongs to the ELP4 family. Component of the elongator complex which consists of ELP1/IKI3, ELP2, ELP3, ELP4, ELP5/IKI1 and ELP6. The elongator complex is composed of two copies of the Elp123 subcomplex (composed of ELP1/IKI3, ELP2 and ELP3) and two copies of the Elp456 subcomplex (composed of ELP4, ELP5/IKI1 and ELP6). The Elp123 subcomplex forms a two-lobed scaffold, which binds the Elp456 subcomplex asymmetrically. In each lobe, ELP2 is tightly sandwiched between ELP1/IKI3 and ELP3. The Elp123 subcomplex binds tRNA through ELP1/IKI3 and ELP3 and can bind 2 tRNAs simultaneously. tRNA-binding by the Elp123 subcomplex induces conformational rearrangements which precisely position the targeted anticodon base in the active site. The Elp456 subcomplex binds tRNA and has ATPase activity. ELP4 interacts with KTI12.

It localises to the cytoplasm. It is found in the nucleus. It participates in tRNA modification; 5-methoxycarbonylmethyl-2-thiouridine-tRNA biosynthesis. Its function is as follows. Component of the elongator complex, a multiprotein complex which is required for multiple tRNA modifications, including mcm5U (5-methoxycarbonylmethyl uridine), mcm5s2U (5-methoxycarbonylmethyl-2-thiouridine), and ncm5U (5-carbamoylmethyl uridine). The elongator complex catalyzes formation of carboxymethyluridine in the wobble base at position 34 in tRNAs. It functions as a gamma-toxin target (TOT); disruption of the complex confers resistance to Kluyveromyces lactis toxin zymocin (pGKL1 killer toxin). May also be involved in sensitivity to Pichia inositovora toxin. This is Elongator complex protein 4 from Saccharomyces cerevisiae (strain ATCC 204508 / S288c) (Baker's yeast).